Consider the following 160-residue polypeptide: Salivary gland broad-spectrum antiviral protein (160 aa).

The helical transmembrane segment at 17 to 37 threads the bilayer; that stretch reads VALGLYFTVVVFVLFITSVNL. 2 N-linked (GlcNAc...) asparagine glycosylation sites follow: Asn62 and Asn145.

In terms of tissue distribution, salivary gland (at protein level).

Its subcellular location is the membrane. Its function is as follows. (Microbial infection) Modulates replication of Zika virus in salivary glands. In terms of biological role, (Microbial infection) Modulates replication of dengue virus type 2 in salivary glands. Functionally, (Microbial infection) Modulates replication of chikungunya virus in salivary glands. The polypeptide is Salivary gland broad-spectrum antiviral protein (Aedes aegypti (Yellowfever mosquito)).